The chain runs to 159 residues: Small ribosomal subunit protein uS7 (159 aa).

This sequence belongs to the universal ribosomal protein uS7 family. In terms of assembly, part of the 30S ribosomal subunit. Contacts proteins S9 and S11.

One of the primary rRNA binding proteins, it binds directly to 16S rRNA where it nucleates assembly of the head domain of the 30S subunit. Is located at the subunit interface close to the decoding center, probably blocks exit of the E-site tRNA. The polypeptide is Small ribosomal subunit protein uS7 (Sulfurihydrogenibium sp. (strain YO3AOP1)).